We begin with the raw amino-acid sequence, 229 residues long: 2,3-bisphosphoglycerate-dependent phosphoglycerate mutase (229 aa).

Residues R8 to N15, T21 to G22, R60, E87 to Y90, K98, R114 to R115, and G183 to N184 each bind substrate. H9 acts as the Tele-phosphohistidine intermediate in catalysis. E87 functions as the Proton donor/acceptor in the catalytic mechanism.

This sequence belongs to the phosphoglycerate mutase family. BPG-dependent PGAM subfamily. In terms of assembly, homodimer.

The catalysed reaction is (2R)-2-phosphoglycerate = (2R)-3-phosphoglycerate. The protein operates within carbohydrate degradation; glycolysis; pyruvate from D-glyceraldehyde 3-phosphate: step 3/5. In terms of biological role, catalyzes the interconversion of 2-phosphoglycerate and 3-phosphoglycerate. This is 2,3-bisphosphoglycerate-dependent phosphoglycerate mutase from Polynucleobacter asymbioticus (strain DSM 18221 / CIP 109841 / QLW-P1DMWA-1) (Polynucleobacter necessarius subsp. asymbioticus).